The primary structure comprises 272 residues: 2-dehydro-3-deoxyphosphooctonate aldolase (272 aa).

It belongs to the KdsA family.

The protein localises to the cytoplasm. The enzyme catalyses D-arabinose 5-phosphate + phosphoenolpyruvate + H2O = 3-deoxy-alpha-D-manno-2-octulosonate-8-phosphate + phosphate. Its pathway is carbohydrate biosynthesis; 3-deoxy-D-manno-octulosonate biosynthesis; 3-deoxy-D-manno-octulosonate from D-ribulose 5-phosphate: step 2/3. It functions in the pathway bacterial outer membrane biogenesis; lipopolysaccharide biosynthesis. The polypeptide is 2-dehydro-3-deoxyphosphooctonate aldolase (Geotalea daltonii (strain DSM 22248 / JCM 15807 / FRC-32) (Geobacter daltonii)).